A 163-amino-acid chain; its full sequence is Sperm acrosome membrane-associated protein 3 (163 aa).

Residues 1-35 form the signal peptide; that stretch reads MEAGSWAPRRWPRPPGIVLLALASVLSSLLSSGQA. Residues 36-163 enclose the C-type lysozyme domain; it reads RVYSRCELAR…LSDWVDGCEL (128 aa). 4 cysteine pairs are disulfide-bonded: C41/C161, C65/C149, C99/C114, and C110/C128.

Belongs to the glycosyl hydrolase 22 family. As to quaternary structure, interacts with ASTL.

The protein resides in the secreted. In terms of biological role, sperm surface membrane protein that may be involved in sperm-egg plasma membrane adhesion and fusion during fertilization. It could be a potential receptor for the egg oligosaccharide residue N-acetylglucosamine, which is present in the extracellular matrix over the egg plasma membrane. The processed form has no detectable bacteriolytic activity in vitro. This is Sperm acrosome membrane-associated protein 3 (SPACA3) from Bos taurus (Bovine).